The sequence spans 192 residues: Ion-translocating oxidoreductase complex subunit B (192 aa).

The interval 1 to 26 (MSTIWIAIAALSALALAFGLVLGYAS) is hydrophobic. Residues 32–91 (ENDPIVEEVEAMLPQSQCGQCGYPGCRPYAEAVALNGENINKCGPGGEAMMLKLAEKLNV) form the 4Fe-4S domain. The [4Fe-4S] cluster site is built by Cys49, Cys52, Cys57, Cys74, Cys117, Cys120, Cys123, Cys127, Cys147, Cys150, Cys153, and Cys157. 4Fe-4S ferredoxin-type domains are found at residues 108 to 137 (QVAW…GSTK) and 138 to 167 (AVHT…LRPI).

Belongs to the 4Fe4S bacterial-type ferredoxin family. RnfB subfamily. The complex is composed of six subunits: RnfA, RnfB, RnfC, RnfD, RnfE and RnfG. Requires [4Fe-4S] cluster as cofactor.

It localises to the cell inner membrane. Functionally, part of a membrane-bound complex that couples electron transfer with translocation of ions across the membrane. In Pectobacterium carotovorum subsp. carotovorum (strain PC1), this protein is Ion-translocating oxidoreductase complex subunit B.